Here is a 1154-residue protein sequence, read N- to C-terminus: Voltage-dependent calcium channel subunit alpha-2/delta-2 (1154 aa).

The N-terminal stretch at 1-18 (MAVPARTCGASWPGPVRT) is a signal peptide. A disordered region spans residues 1 to 37 (MAVPARTCGASWPGPVRTARPWPGRGPRPCPDPRGPA). Over 19–1116 (ARPWPGRGPR…TEDTSDCGRG (1098 aa)) the chain is Extracellular. The span at 24-34 (GRGPRPCPDPR) shows a compositional bias: pro residues. N-linked (GlcNAc...) asparagine glycosylation is present at Asn-205. The VWFA domain occupies 294 to 472 (DMVIIVDVSG…INTQEYLDVL (179 aa)). Asp-300, Ser-302, and Ser-304 together coordinate a divalent metal cation. The MIDAS-like motif signature appears at 300–304 (DVSGS). N-linked (GlcNAc...) asparagine glycosylation is found at Asn-389, Asn-421, Asn-510, Asn-543, Asn-627, and Asn-864. A disulfide bond links Cys-446 and Cys-1101. One can recognise a Cache domain in the interval 488–577 (WTNVYEDALG…KPQTTNFREP (90 aa)). The helical transmembrane segment at 1117–1137 (ASFPPSLGVLVSLQLLLLLGL) threads the bilayer. Residues 1138-1154 (PPRPQPQVHSFAASRHL) are Cytoplasmic-facing.

Belongs to the calcium channel subunit alpha-2/delta family. As to quaternary structure, dimer formed of alpha-2-2 and delta-2 chains; disulfide-linked. Voltage-dependent calcium channels are multisubunit complexes, consisting of alpha-1 (CACNA1), alpha-2 (CACNA2D), beta (CACNB) and delta (CACNA2D) subunits in a 1:1:1:1 ratio. In terms of processing, N-glycosylated. Post-translationally, may be proteolytically processed into subunits alpha-2-2 and delta-2 that are disulfide-linked. It is however unclear whether such cleavage really takes place in vivo and has a functional role. According to PubMed:11306709, it is processed, at least in vitro, while according to PubMed:17052222, it is only poorly processed in vivo. Predominantly expressed in brain in a restricted pattern. Also expressed at lower level in kidney and testis Not expressed in lung at any moment of development. In brain, it localizes to sections of P21 brain. Expressed at high level in the cerebellum, with moderate levels in medulla, pons, and striatum. Also expressed in cortex, hippocampus, habenula and nucleus reticularis thalami (nRT). Strongly expressed in cerebellar Purkinje cells.

The protein localises to the membrane. In terms of biological role, the alpha-2/delta subunit of voltage-dependent calcium channels regulates calcium current density and activation/inactivation kinetics of the calcium channel. Acts as a regulatory subunit for P/Q-type calcium channel (CACNA1A), N-type (CACNA1B), L-type (CACNA1C OR CACNA1D) and possibly T-type (CACNA1G). This chain is Voltage-dependent calcium channel subunit alpha-2/delta-2 (Cacna2d2), found in Mus musculus (Mouse).